A 283-amino-acid chain; its full sequence is Foldase protein PrsA 3 (283 aa).

Positions 1–21 (MKKKKIFIGTIISCVMLALSA) are cleaved as a signal peptide. Cysteine 22 carries the N-palmitoyl cysteine lipid modification. Residue cysteine 22 is the site of S-diacylglycerol cysteine attachment. Residues 132-222 (KPEMKVSHIL…YGYHIIKVTD (91 aa)) form the PpiC domain.

This sequence belongs to the PrsA family.

It is found in the cell membrane. It catalyses the reaction [protein]-peptidylproline (omega=180) = [protein]-peptidylproline (omega=0). Plays a major role in protein secretion by helping the post-translocational extracellular folding of several secreted proteins. The sequence is that of Foldase protein PrsA 3 (prsA3) from Bacillus cereus (strain ATCC 14579 / DSM 31 / CCUG 7414 / JCM 2152 / NBRC 15305 / NCIMB 9373 / NCTC 2599 / NRRL B-3711).